The following is a 74-amino-acid chain: Ferredoxin MycCII (74 aa).

The 29-residue stretch at 1-29 folds into the 4Fe-4S ferredoxin-type domain; the sequence is MRIVLDAERCVGAGQCEATAPELFTQGDD. 3 residues coordinate [3Fe-4S] cluster: Cys-10, Cys-16, and Cys-54.

It depends on [3Fe-4S] cluster as a cofactor.

Its pathway is antibiotic biosynthesis; mycinamicin biosynthesis. Specific electron transport protein capable of effectively supporting cytochrome P450 MycCI activity in the biosynthesis of mycinamicin, a 16-membered macrolide antibiotic. This is Ferredoxin MycCII from Micromonospora griseorubida.